The following is a 288-amino-acid chain: Glycine--tRNA ligase alpha subunit (288 aa).

This sequence belongs to the class-II aminoacyl-tRNA synthetase family. Tetramer of two alpha and two beta subunits.

The protein resides in the cytoplasm. It carries out the reaction tRNA(Gly) + glycine + ATP = glycyl-tRNA(Gly) + AMP + diphosphate. This chain is Glycine--tRNA ligase alpha subunit, found in Desulfatibacillum aliphaticivorans.